The following is a 448-amino-acid chain: uncharacterized protein (448 aa).

Component of the acid-insoluble and acid-soluble organic matrix of the aragonitic skeleton (at protein level).

The protein localises to the secreted. This is an uncharacterized protein from Acropora millepora (Staghorn coral).